Consider the following 312-residue polypeptide: Tyrosine recombinase XerC (312 aa).

One can recognise a Core-binding (CB) domain in the interval 1-103 (MIASIYSFLD…SIKSFAHYCV (103 aa)). Residues 124 to 306 (ELPSPMTYAQ…SVKLKKQTHQ (183 aa)) form the Tyr recombinase domain. Catalysis depends on residues Arg164, Lys188, His258, Arg261, and His284. The O-(3'-phospho-DNA)-tyrosine intermediate role is filled by Tyr293.

This sequence belongs to the 'phage' integrase family. XerC subfamily. As to quaternary structure, forms a cyclic heterotetrameric complex composed of two molecules of XerC and two molecules of XerD.

It is found in the cytoplasm. Functionally, site-specific tyrosine recombinase, which acts by catalyzing the cutting and rejoining of the recombining DNA molecules. The XerC-XerD complex is essential to convert dimers of the bacterial chromosome into monomers to permit their segregation at cell division. It also contributes to the segregational stability of plasmids. This is Tyrosine recombinase XerC from Chlamydia pneumoniae (Chlamydophila pneumoniae).